Here is a 359-residue protein sequence, read N- to C-terminus: uncharacterized protein (359 aa).

Gly46 to Ser53 contributes to the ATP binding site.

Belongs to the archaeal ATPase family.

This is an uncharacterized protein from Methanocaldococcus jannaschii (strain ATCC 43067 / DSM 2661 / JAL-1 / JCM 10045 / NBRC 100440) (Methanococcus jannaschii).